Consider the following 429-residue polypeptide: MLVVKKTPKINGILNAPPSKSYTHRAVICASLANGLSNLKNPLNGADCLSSAHACEMFGAEIELSDEQWVIRGSELKTPDNIVDIGNSGTTLRILTGISSQISNGYTILTGDDSIRKRPMQPLLDALKQLGIESFSTKNNGTAPIVVKSGKISNNVVEIRGDMSSQFITSLMMTLPFSENDSKIVLTTPLKSEPYLNITIDVLDKFGVKIEKNEEKNKLGYKIKGNQRYSPCEYIIEGDYSSASYLVAAGVLLNSDIVIKNVFKNSKQGDREIIEIVKKMGADVEINEDNVKITGPYNLKGIEIDVTDIPDLVPTIAVLGCFAEGKTVVYNGEHVRIKECDRLAACTLELSKMGAEIEEKKDGLIITGVHKLNGAKLKTYHDHRLVMAFTIAGMLADGETIIEGEDSVKISFPDFVDKMKSIGSNIEVI.

Residues Lys-20, Ser-21, and Arg-25 each contribute to the 3-phosphoshikimate site. Lys-20 serves as a coordination point for phosphoenolpyruvate. Phosphoenolpyruvate is bound by residues Gly-89 and Arg-118. Positions 164, 165, 166, 192, 311, and 338 each coordinate 3-phosphoshikimate. Gln-166 contributes to the phosphoenolpyruvate binding site. Residue Asp-311 is the Proton acceptor of the active site. Residues Arg-342 and Arg-384 each coordinate phosphoenolpyruvate.

The protein belongs to the EPSP synthase family. In terms of assembly, monomer.

The protein resides in the cytoplasm. The enzyme catalyses 3-phosphoshikimate + phosphoenolpyruvate = 5-O-(1-carboxyvinyl)-3-phosphoshikimate + phosphate. It participates in metabolic intermediate biosynthesis; chorismate biosynthesis. Functionally, catalyzes the transfer of the enolpyruvyl moiety of phosphoenolpyruvate (PEP) to the 5-hydroxyl of shikimate-3-phosphate (S3P) to produce enolpyruvyl shikimate-3-phosphate and inorganic phosphate. The sequence is that of 3-phosphoshikimate 1-carboxyvinyltransferase from Methanococcus maripaludis (strain C6 / ATCC BAA-1332).